A 440-amino-acid chain; its full sequence is tRNA-2-methylthio-N(6)-dimethylallyladenosine synthase (440 aa).

The 117-residue stretch at 3-119 folds into the MTTase N-terminal domain; that stretch reads KKFFIKTFGC…LPELINQAQA (117 aa). 6 residues coordinate [4Fe-4S] cluster: cysteine 12, cysteine 48, cysteine 82, cysteine 158, cysteine 162, and cysteine 165. The Radical SAM core domain occupies 144-374; sequence RDNKYCAYVT…LELQKSILSE (231 aa). Residues 377 to 437 enclose the TRAM domain; the sequence is KKYEGTVQEV…PFSLEGELLE (61 aa).

It belongs to the methylthiotransferase family. MiaB subfamily. As to quaternary structure, monomer. It depends on [4Fe-4S] cluster as a cofactor.

Its subcellular location is the cytoplasm. It carries out the reaction N(6)-dimethylallyladenosine(37) in tRNA + (sulfur carrier)-SH + AH2 + 2 S-adenosyl-L-methionine = 2-methylsulfanyl-N(6)-dimethylallyladenosine(37) in tRNA + (sulfur carrier)-H + 5'-deoxyadenosine + L-methionine + A + S-adenosyl-L-homocysteine + 2 H(+). Catalyzes the methylthiolation of N6-(dimethylallyl)adenosine (i(6)A), leading to the formation of 2-methylthio-N6-(dimethylallyl)adenosine (ms(2)i(6)A) at position 37 in tRNAs that read codons beginning with uridine. The polypeptide is tRNA-2-methylthio-N(6)-dimethylallyladenosine synthase (Aquifex aeolicus (strain VF5)).